A 107-amino-acid polypeptide reads, in one-letter code: U1-lycotoxin-Ls1b (107 aa).

The first 20 residues, 1–20 (MMKVLVVVALLVTLISYSSG), serve as a signal peptide directing secretion. The propeptide occupies 21 to 41 (EGIDDLEADELLSLMANEQTR). 4 disulfide bridges follow: Cys44/Cys59, Cys51/Cys68, Cys58/Cys86, and Cys70/Cys84.

The protein belongs to the neurotoxin 19 (CSTX) family. 04 (U1-Lctx) subfamily. In terms of tissue distribution, expressed by the venom gland.

It is found in the secreted. The chain is U1-lycotoxin-Ls1b from Lycosa singoriensis (Wolf spider).